The following is a 957-amino-acid chain: UvrABC system protein A (957 aa).

33–40 is a binding site for ATP; sequence GLSGSGKS. The C4-type zinc-finger motif lies at 252 to 279; sequence CPHCGFSIGELEPRLFSFNSPFGACPTC. ABC transporter domains lie at 309 to 587 and 607 to 935; these read WTPI…PNSL and PDGR…RYLK. 639–646 provides a ligand contact to ATP; that stretch reads GVSGSGKS. A C4-type zinc finger spans residues 738-764; the sequence is CEACRGDGIIKIEMHFLPDVYVPCEVC.

This sequence belongs to the ABC transporter superfamily. UvrA family. Forms a heterotetramer with UvrB during the search for lesions.

It is found in the cytoplasm. The UvrABC repair system catalyzes the recognition and processing of DNA lesions. UvrA is an ATPase and a DNA-binding protein. A damage recognition complex composed of 2 UvrA and 2 UvrB subunits scans DNA for abnormalities. When the presence of a lesion has been verified by UvrB, the UvrA molecules dissociate. This Bacillus subtilis (strain 168) protein is UvrABC system protein A.